Reading from the N-terminus, the 478-residue chain is Antiviral innate immune response effector IFIT1 (478 aa).

TPR repeat units follow at residues 52-85, 95-128, 139-174, 183-216, 218-249, and 251-284; these read VGIH…MQKE, LVTW…CKKP, PEID…DHEN, ISAY…NPDN, YLKV…NMSS, and TYVF…TPTS. An mRNA-binding site is contributed by W147. G190 provides a ligand contact to RNA. Positions 259, 289, 290, and 336 each coordinate RNA. TPR repeat units follow at residues 305–339, 340–373, 378–412, and 437–470; these read ATKG…KPTF, EVAH…KPVV, QDIH…EQTS, and LESL…AADF.

It belongs to the IFIT family. Component of an interferon-dependent multiprotein complex, at least composed of IFIT1, IFIT2 and IFIT3. Interacts (via TPR repeats 1-4) with RPL15. Interacts with STING1/MITA; could disrupt STING1 interaction with MAVS or TBK1, acting as a negative-feedback regulator of virus-triggered signaling. Interacts with EIF3E; this could be an alternative way to inhibit translation. Phosphorylated. Post-translationally, ISGylated.

It is found in the cytoplasm. In terms of biological role, plays a key role in the innate immune response as part of an interferon-dependent multiprotein complex, recognizing and sequestering viral RNAs that lack host-specific 2'-O-methylation at their 5' cap. By distinguishing these RNAs from host mRNAs, inhibits their translation by competing with the translation initiation factor eIF4E. Could also prevent viral replication through its interaction with DNA replication origin-binding protein E1 of several viruses. Causes the translocation of E1 from the nucleus to the cytoplasm and can also inhibit its helicase activity in vitro. The sequence is that of Antiviral innate immune response effector IFIT1 from Macaca fascicularis (Crab-eating macaque).